A 362-amino-acid chain; its full sequence is Talin rod domain-containing protein 1 (362 aa).

A disordered region spans residues 1–27; sequence MASGSAGKPTGEAASPAPGSAVGGASS. Alanine 2 is subject to N-acetylalanine. Low complexity predominate over residues 9 to 27; it reads PTGEAASPAPGSAVGGASS.

As to quaternary structure, may homodimerize. Interacts with F-actin. Ubiquitous.

Actin-binding protein which may have an oncogenic function and regulates cell proliferation, migration and invasion in cancer cells. This chain is Talin rod domain-containing protein 1, found in Mus musculus (Mouse).